The sequence spans 496 residues: Palmitoleoyl-protein carboxylesterase NOTUM (496 aa).

The signal sequence occupies residues methionine 1–glycine 19. The disordered stretch occupies residues glutamate 21–glycine 46. At serine 81 the chain carries Phosphoserine; by FAM20C. The N-linked (GlcNAc...) asparagine glycan is linked to asparagine 96. Active-site charge relay system residues include serine 232, aspartate 340, and histidine 389.

It belongs to the pectinacetylesterase family. Notum subfamily. As to expression, rarely expressed in adult normal tissues.

The protein localises to the secreted. The enzyme catalyses [Wnt protein]-O-(9Z)-hexadecenoyl-L-serine + H2O = [Wnt protein]-L-serine + (9Z)-hexadecenoate + H(+). Carboxylesterase that acts as a key negative regulator of the Wnt signaling pathway by specifically mediating depalmitoleoylation of WNT proteins. Serine palmitoleoylation of WNT proteins is required for efficient binding to frizzled receptors. This is Palmitoleoyl-protein carboxylesterase NOTUM from Homo sapiens (Human).